The sequence spans 345 residues: Tropomodulin-4 (345 aa).

2 disordered regions span residues proline 40–aspartate 64 and alanine 326–arginine 345. Basic and acidic residues predominate over residues asparagine 336–arginine 345.

Belongs to the tropomodulin family. As to quaternary structure, binds to the N-terminus of tropomyosin and to actin.

The protein resides in the cytoplasm. It is found in the cytoskeleton. In terms of biological role, blocks the elongation and depolymerization of the actin filaments at the pointed end. The Tmod/TM complex contributes to the formation of the short actin protofilament, which in turn defines the geometry of the membrane skeleton. In Mus musculus (Mouse), this protein is Tropomodulin-4 (Tmod4).